We begin with the raw amino-acid sequence, 654 residues long: Tumor necrosis factor alpha-induced protein 2 (654 aa).

Disordered stretches follow at residues 1 to 38 (MSEA…KKSK) and 50 to 78 (GKKK…PPPT). Basic residues predominate over residues 28-38 (KKKKEKKKKSK).

It belongs to the SEC6 family.

Its function is as follows. May play a role as a mediator of inflammation and angiogenesis. The polypeptide is Tumor necrosis factor alpha-induced protein 2 (TNFAIP2) (Homo sapiens (Human)).